Here is a 425-residue protein sequence, read N- to C-terminus: UDP-sugar transporter protein SLC35A5 (425 aa).

Residues 1-7 (MESNCGH) lie on the Cytoplasmic side of the membrane. Residues 8–28 (PMLSVSSAMYTFLLGAIFITL) traverse the membrane as a helical segment. Residues 29–52 (SSSRILLVKYSANEENKYDYLPTT) are Lumenal-facing. Residues 53 to 73 (VNVCSELVKLVFCALVSFWVL) form a helical membrane-spanning segment. The Cytoplasmic portion of the chain corresponds to 74-92 (KKEDHQNRKLRCGSWKEFF). Residues 93-115 (NFMKWSIPAFLYFLDNLIVFYVL) form a helical membrane-spanning segment. At 116-119 (SYLQ) the chain is on the lumenal side. Residues 120–142 (PAMAVIFSNFSIITTALLFRIVL) form a helical membrane-spanning segment. Residues 143 to 147 (KRHLN) are Cytoplasmic-facing. Residues 148–168 (GIQWASLLILFLSIVALTSGT) form a helical membrane-spanning segment. Over 169-228 (ETSQHSLAGHGFHHDALFSPSNSCLLFRSECPRKDNCTAKEWTFSEAQWNTTARVFSHIR) the chain is Lumenal. N-linked (GlcNAc...) asparagine glycans are attached at residues N204 and N218. The helical transmembrane segment at 229-249 (LGLGHVLIIVQCFISSMANIY) threads the bilayer. At 250 to 263 (NEKILKEGNQLTES) the chain is on the cytoplasmic side. A helical membrane pass occupies residues 264-284 (IFVQNSKLYFFGVLFNGLTLG). Topologically, residues 285–303 (LQSGNRDQIKNCGIFYGHN) are lumenal. Residues 304–324 (AFSVALIFVTAFQGLSVAFIL) traverse the membrane as a helical segment. The Cytoplasmic portion of the chain corresponds to 325–330 (KFLDNM). The chain crosses the membrane as a helical span at residues 331-351 (FHVLMAQVTTVVITTVSVLVF). Residues 352–354 (DFR) are Lumenal-facing. The helical transmembrane segment at 355 to 375 (PSLEFFLEAPSVLLSILIYNA) threads the bilayer. Over 376-425 (SNPQGVENVPRKERIRDLSGTLWERSSGDGEELERLTKPKSDIESDEDTF) the chain is Cytoplasmic. Phosphoserine occurs at positions 394, 416, and 420. The disordered stretch occupies residues 398–425 (WERSSGDGEELERLTKPKSDIESDEDTF). Residues 408 to 418 (LERLTKPKSDI) are compositionally biased toward basic and acidic residues.

It belongs to the nucleotide-sugar transporter family. SLC35A subfamily. As to quaternary structure, probably forms homooligomers and heterooligomers with SLC35A1, SLC35A2, SLC35A3 and SLC35A4.

It localises to the golgi apparatus membrane. The catalysed reaction is UMP(out) + UDP-alpha-D-glucuronate(in) = UMP(in) + UDP-alpha-D-glucuronate(out). It catalyses the reaction UMP(out) + UDP-N-acetyl-alpha-D-glucosamine(in) = UMP(in) + UDP-N-acetyl-alpha-D-glucosamine(out). The enzyme catalyses UDP-N-acetyl-alpha-D-galactosamine(in) + UMP(out) = UDP-N-acetyl-alpha-D-galactosamine(out) + UMP(in). In terms of biological role, probable UDP-sugar:UMP transmembrane antiporter involved in UDP-alpha-D-glucuronate/UDP-GlcA, UDP-GlcNAc/UDP-N-acetyl-alpha-D-glucosamine and UDP-N-acetyl-alpha-D-galactosamine/UDP-GalNAc transport from the cytosol to the lumen of the Golgi. This chain is UDP-sugar transporter protein SLC35A5, found in Bos taurus (Bovine).